The sequence spans 364 residues: MTVLKVKFTKTKRDKLAQILWILNWVSVVSGIILFSLGLFLKIEIKKRNEVMAKGDINSVPNMLISVGVIACVVNFLGGKICYDCSDANKFSRWKLIMLPYIICTFCFTFCILLGALMCYTMRNELEESLYLGLRDAIKFYKDTDIPGRCFLKKTVDMLQIGFQCCGNNGFRDWFEVQWVSARYLNMASKEVMDRFKSNVDGKFLVDGVPFSCCNPSSPRPCIQYHLTNNSAHYNYDFLTEELNIWVKGCREALLEYYTAIMRSIGIAALLIWLFELSVLIGVRYLQTAMKNVLLQGDLQGESDGWLLENSFVETAKYNINIIKNLGKANQISTVSGMNDPNINVQNTNCGKSNVTAKSIPAAS.

Residues 1 to 24 are Cytoplasmic-facing; it reads MTVLKVKFTKTKRDKLAQILWILN. The helical transmembrane segment at 25–43 threads the bilayer; that stretch reads WVSVVSGIILFSLGLFLKI. The Lumenal portion of the chain corresponds to 44-61; the sequence is EIKKRNEVMAKGDINSVP. Residues 62 to 80 form a helical membrane-spanning segment; that stretch reads NMLISVGVIACVVNFLGGK. At 81–99 the chain is on the cytoplasmic side; the sequence is ICYDCSDANKFSRWKLIML. Residues 100–123 traverse the membrane as a helical segment; it reads PYIICTFCFTFCILLGALMCYTMR. The Lumenal portion of the chain corresponds to 124–264; the sequence is NELEESLYLG…LEYYTAIMRS (141 aa). Asparagine 229 carries N-linked (GlcNAc...) asparagine glycosylation. A helical transmembrane segment spans residues 265–290; that stretch reads IGIAALLIWLFELSVLIGVRYLQTAM. Residues 291 to 364 are Cytoplasmic-facing; that stretch reads KNVLLQGDLQ…VTAKSIPAAS (74 aa).

The protein belongs to the PRPH2/ROM1 family.

The protein resides in the membrane. This is Photoreceptor outer segment membrane glycoprotein 2 from Gallus gallus (Chicken).